Here is a 1198-residue protein sequence, read N- to C-terminus: MREDDEQYFRRLESDLDTALSVAREARKRGGDPTEDIEIPIAKDMADRVENILGIDGVAERVREMEADPDLSREEAALELAADFANDEVGDYETRAGKVEGAVRTAVALLTEGVVAAPIEGIDRVELLENDDGTEFINIYYAGPIRSAGGTAQALSVLVADYTRTLIGIDEYKARNDETERYAEELSLYDDETGLQYAPKDEETKFIAEHMPIMLDGEATGDEEVSGFRDLERVDTNSARGGMCLVLGEGIAQKAPKIQRYTSQLDEVDWPWLQDLIDGTYKTGEDTDEADADSDDGTDEDAADDSDIDDSSAGDEEADAPSGPPRPDPQKKFLRDLIAGRPVFGHPSEPGGFRLRYGRARNHGFATAGVHPAAMHLIDDFLATGTQIKTERPGKAAGVVPVDTIEGPTVKLANGDVRRVDDPEEALEIRNGVEAILDLGEYLVNYGEFVENNHPLSPAAYAPEWWTQDLAAAGADVQALADSPRVDLEHPSAEQALEWAERYDAPLHPEYTYLWHDLDVERFEALAAAASEGHWAETDGAQQTRPPDGAAESTLVVPRSEPVREALEVLLVEHTQGEETLTVPDAEPLVRSLGLTEGLERTWDELSTAARSYDDGDNAVRAVNEVAPFEVRERAPTRIGCRMGRPEKSEKRDLSPAVHTLFPIGEAGGSQRDIAEAATHAESMQDTPGEVEVQVGRRQCPACDTETFRARCPDCESVTDPRYVCYDCNIDVDPDESGRAICPNCEREADAVQNRTVNVHEEYRSALSNVGERENAFDVLKGVKGLSSEHKVPEPIEKGVLRAKHGVSAFKDGTVRYDMTDLPVTSVRAAELDVTADQLRSLGYETDIHGEPLTHEDQLVELRVQDVVLSNGAAEHMLRTADFVDDLLEQYYGLEPFYDAEDRDDIVGELVFGMAPHTSAAVVGRVIGFTSAAVGYAHPYFHAAKRRNCDGDEDCVMLLLDGLLNFSKTFLPDQRGGRMDAPLVMSSRIDPAEIDDEAHNMDIVSSYPRAFFEATREMADPGEVESLIQLGEDTLGTADEYRGFEHTHDTVDLAAGPDLSAYKTLGDMMEKMDAQLELSRKLRSVDETDVAERVIEYHFLPDIIGNLRAFSRQETRCLDCGEKYRRVPLTGDCRECGGRVNLTVHQGSVNKYIDTAIQVAEEYGCREYTKQRLRILDRAVESIFEDDTNKQSGIADFM.

Disordered regions lie at residues 281 to 332 (YKTG…PQKK) and 534 to 553 (HWAETDGAQQTRPPDGAAES). The span at 286–319 (DTDEADADSDDGTDEDAADDSDIDDSSAGDEEAD) shows a compositional bias: acidic residues.

It belongs to the archaeal DNA polymerase II family. As to quaternary structure, heterodimer of a large subunit and a small subunit.

The enzyme catalyses DNA(n) + a 2'-deoxyribonucleoside 5'-triphosphate = DNA(n+1) + diphosphate. The catalysed reaction is Exonucleolytic cleavage in the 3'- to 5'-direction to yield nucleoside 5'-phosphates.. Its function is as follows. Possesses two activities: a DNA synthesis (polymerase) and an exonucleolytic activity that degrades single-stranded DNA in the 3'- to 5'-direction. Has a template-primer preference which is characteristic of a replicative DNA polymerase. The chain is DNA polymerase II large subunit from Natronomonas pharaonis (strain ATCC 35678 / DSM 2160 / CIP 103997 / JCM 8858 / NBRC 14720 / NCIMB 2260 / Gabara) (Halobacterium pharaonis).